A 143-amino-acid chain; its full sequence is UPF0201 protein Pars_1985 (143 aa).

Belongs to the UPF0201 family.

The sequence is that of UPF0201 protein Pars_1985 from Pyrobaculum arsenaticum (strain DSM 13514 / JCM 11321 / PZ6).